A 318-amino-acid chain; its full sequence is Ankyrin repeat and SOCS box protein 7 (318 aa).

ANK repeat units follow at residues 13–42, 46–75, 80–109, 116–145, 149–178, 180–208, and 213–242; these read QEEL…SPNG, NGWT…DPTV, GGFT…RSDI, DGWT…EVDP, KGTT…NIDI, NGFL…DTNL, and DGQT…DTNT. The region spanning 265–318 is the SOCS box domain; sequence LDFLQEVTRQPRNLQDLCRIKIRQCIGLQNLKLLDELPIAKVMKDYLKHKFDDI.

Belongs to the ankyrin SOCS box (ASB) family. Interacts with CUL5. Interacts with RNF7. Interacts with PSRC1.

It functions in the pathway protein modification; protein ubiquitination. Probable substrate-recognition component of a SCF-like ECS (Elongin-Cullin-SOCS-box protein) E3 ubiquitin-protein ligase complex which mediates the ubiquitination and subsequent proteasomal degradation of target proteins. Plays a role in spindle dynamics and genome integrity by targeting the mitotic progression protein PSRC1 for proteasomal degradation in a cell cycle-dependent manner. Also participates in meiosis by mediating the proper attachment between kinetochores and microtubules. This is Ankyrin repeat and SOCS box protein 7 (ASB7) from Homo sapiens (Human).